Reading from the N-terminus, the 136-residue chain is Small ribosomal subunit protein uS12 (136 aa).

A 3-methylthioaspartic acid modification is found at D89. Residues 104 to 136 are disordered; sequence TAGVNGRTQRRSKYGAKRPKPGQAAAAAKGKKK. Basic residues predominate over residues 111-123; the sequence is TQRRSKYGAKRPK. Low complexity predominate over residues 124-136; the sequence is PGQAAAAAKGKKK.

It belongs to the universal ribosomal protein uS12 family. Part of the 30S ribosomal subunit. Contacts proteins S8 and S17. May interact with IF1 in the 30S initiation complex.

With S4 and S5 plays an important role in translational accuracy. In terms of biological role, interacts with and stabilizes bases of the 16S rRNA that are involved in tRNA selection in the A site and with the mRNA backbone. Located at the interface of the 30S and 50S subunits, it traverses the body of the 30S subunit contacting proteins on the other side and probably holding the rRNA structure together. The combined cluster of proteins S8, S12 and S17 appears to hold together the shoulder and platform of the 30S subunit. The protein is Small ribosomal subunit protein uS12 of Parabacteroides distasonis (strain ATCC 8503 / DSM 20701 / CIP 104284 / JCM 5825 / NCTC 11152).